The following is a 388-amino-acid chain: Chitinase 4 (388 aa).

In terms of domain architecture, GH18 spans 22–375 (FKTCVYFSNW…KNFVDQLGGV (354 aa)). N-linked (GlcNAc...) asparagine glycans are attached at residues Asn-30 and Asn-82. Chitin is bound by residues 82 to 83 (NQ) and 109 to 112 (GGWG). Asn-123 and Asn-132 each carry an N-linked (GlcNAc...) asparagine glycan. Glu-151 (proton donor) is an active-site residue. Residue Tyr-152 participates in chitin binding. N-linked (GlcNAc...) asparagine glycosylation is present at Asn-155. Position 208-211 (208-211 (MCYD)) interacts with chitin. N-linked (GlcNAc...) asparagine glycosylation occurs at Asn-237. Trp-350 contributes to the chitin binding site.

The protein belongs to the glycosyl hydrolase 18 family. Chitinase class V subfamily.

The protein resides in the secreted. It catalyses the reaction Random endo-hydrolysis of N-acetyl-beta-D-glucosaminide (1-&gt;4)-beta-linkages in chitin and chitodextrins.. Functionally, chitinase involved in the remodeling of chitin in the fungal cell wall. Plays a role in sporulation. The sequence is that of Chitinase 4 (CHT4) from Candida albicans (strain SC5314 / ATCC MYA-2876) (Yeast).